The following is a 497-amino-acid chain: Putative diacyglycerol O-acyltransferase MT3584 (497 aa).

The Proton acceptor role is filled by H143.

Belongs to the long-chain O-acyltransferase family.

It carries out the reaction an acyl-CoA + a 1,2-diacyl-sn-glycerol = a triacyl-sn-glycerol + CoA. It functions in the pathway glycerolipid metabolism; triacylglycerol biosynthesis. This is Putative diacyglycerol O-acyltransferase MT3584 from Mycobacterium tuberculosis (strain CDC 1551 / Oshkosh).